The following is a 539-amino-acid chain: Membrane protein insertase YidC (539 aa).

5 helical membrane passes run 6–26 (TLLV…WQVA), 341–361 (SVIQ…TFIV), 416–436 (LGGC…YWAL), 454–474 (LSAQ…MFLI), and 495–515 (PVMF…YWLV).

This sequence belongs to the OXA1/ALB3/YidC family. Type 1 subfamily. As to quaternary structure, interacts with the Sec translocase complex via SecD. Specifically interacts with transmembrane segments of nascent integral membrane proteins during membrane integration.

It is found in the cell inner membrane. Required for the insertion and/or proper folding and/or complex formation of integral membrane proteins into the membrane. Involved in integration of membrane proteins that insert both dependently and independently of the Sec translocase complex, as well as at least some lipoproteins. Aids folding of multispanning membrane proteins. This is Membrane protein insertase YidC from Vibrio vulnificus (strain CMCP6).